Here is a 3476-residue protein sequence, read N- to C-terminus: Abnormal spindle-like microcephaly-associated protein homolog (3476 aa).

A disordered region spans residues 1 to 30 (MANRRVGRGCWEVSPTERRPPAGLRGPAAE). 5 positions are modified to phosphoserine: serine 280, serine 283, serine 367, serine 392, and serine 425. Disordered regions lie at residues 416–443 (SNEN…ECQG) and 562–581 (APSS…GSME). At serine 604 the chain carries Phosphoserine. Residues 919–1055 (KASKEILLAF…LLWKIAFAFQ (137 aa)) form the Calponin-homology (CH) 1 domain. Positions 1056-1077 (VDISLNLDQLKEEIAFLKHTKS) form a coiled coil. Serine 1102 carries the post-translational modification Phosphoserine. Residues 1109-1260 (SENIKLLMDW…YLSFLCARLL (152 aa)) form the Calponin-homology (CH) 2 domain. 40 IQ domains span residues 1346-1377 (QNKA…IILQ), 1392-1421 (YLWA…MLKS), 1581-1612 (LKKT…VIIQ), 1604-1633 (MKKA…KTRS), 1631-1660 (TRSA…SVIK), 1654-1683 (ILTS…ATIK), 1727-1756 (MRES…AVIS), 1750-1781 (QRKA…IVIQ), 1800-1829 (VKKA…AALK), 1823-1852 (QSIA…SIIK), 1873-1902 (TKAA…AVLK), 1896-1927 (EHQA…LVIQ), 1946-1977 (LRHA…VIIQ), 1969-2000 (QHKC…LLIQ), 2019-2048 (TKAA…AAVT), 2042-2073 (CNKA…IIIQ), 2092-2123 (LKKT…TFIK), 2115-2146 (MHRA…IVIQ), 2165-2196 (ILKA…TLIQ), 2238-2269 (LRHS…TLIQ), 2261-2292 (MHIA…ILIQ), 2310-2341 (VQNA…TFIQ), 2333-2364 (MHRA…VVIQ), 2383-2414 (QRHS…TLIQ), 2406-2437 (MHSS…IFVQ), 2456-2487 (LRKA…ILIQ), 2479-2510 (MQRA…ILIQ), 2529-2560 (QWHS…IIIQ), 2623-2652 (QHQA…TVVS), 2664-2695 (RTQA…TLIQ), 2687-2718 (MHQA…VVIQ), 2737-2766 (VQKS…EKVA), 2858-2889 (QKRA…VVLQ), 2908-2937 (IRSS…STIK), 2931-2962 (IKNS…KIQA), 2953-2984 (KVKA…KIIQ), 3028-3059 (RHRA…LIIQ), 3078-3109 (FKKS…RLLH), 3180-3209 (RNRA…GIIK), and 3203-3234 (FTSG…IRLS).

The protein localises to the cytoplasm. Its subcellular location is the cytoskeleton. The protein resides in the spindle. It localises to the nucleus. Functionally, probable role in mitotic spindle regulation and coordination of mitotic processes. May have a preferential role in regulating neurogenesis. The chain is Abnormal spindle-like microcephaly-associated protein homolog (ASPM) from Gorilla gorilla gorilla (Western lowland gorilla).